A 403-amino-acid polypeptide reads, in one-letter code: Phosphomevalonate dehydratase large subunit (403 aa).

(R)-5-phosphomevalonate is bound by residues G48, V49, S50, N79, and P80. C119 lines the [4Fe-4S] cluster pocket. (R)-5-phosphomevalonate contacts are provided by E138 and S139. The [4Fe-4S] cluster site is built by C301 and C358. K378 contacts (R)-5-phosphomevalonate.

This sequence belongs to the AcnX type II large subunit family. Heterodimer composed of a large subunit (PMDh-L) and a small subunit (PMDh-S). [4Fe-4S] cluster serves as cofactor.

The enzyme catalyses (R)-5-phosphomevalonate = (2E)-3-methyl-5-phosphooxypent-2-enoate + H2O. It functions in the pathway isoprenoid biosynthesis; isopentenyl diphosphate biosynthesis via mevalonate pathway. Functionally, component of a hydro-lyase that catalyzes the dehydration of mevalonate 5-phosphate (MVA5P) to form trans-anhydromevalonate 5-phosphate (tAHMP). Involved in the archaeal mevalonate (MVA) pathway, which provides fundamental precursors for isoprenoid biosynthesis, such as isopentenyl diphosphate (IPP) and dimethylallyl diphosphate (DMAPP). The protein is Phosphomevalonate dehydratase large subunit of Methanocaldococcus jannaschii (strain ATCC 43067 / DSM 2661 / JAL-1 / JCM 10045 / NBRC 100440) (Methanococcus jannaschii).